Reading from the N-terminus, the 359-residue chain is GDSL esterase/lipase At2g30310 (359 aa).

A signal peptide spans 1-28 (MSTSKTIVFGLFVATLLVSCNVAANATT). Ser41 acts as the Nucleophile in catalysis. Residues Asn103 and Asn325 are each glycosylated (N-linked (GlcNAc...) asparagine). Residues Asp333 and His336 contribute to the active site.

It belongs to the 'GDSL' lipolytic enzyme family.

It localises to the secreted. This chain is GDSL esterase/lipase At2g30310, found in Arabidopsis thaliana (Mouse-ear cress).